A 125-amino-acid polypeptide reads, in one-letter code: Ribonuclease P protein component (125 aa).

It belongs to the RnpA family. Consists of a catalytic RNA component (M1 or rnpB) and a protein subunit.

It carries out the reaction Endonucleolytic cleavage of RNA, removing 5'-extranucleotides from tRNA precursor.. Its function is as follows. RNaseP catalyzes the removal of the 5'-leader sequence from pre-tRNA to produce the mature 5'-terminus. It can also cleave other RNA substrates such as 4.5S RNA. The protein component plays an auxiliary but essential role in vivo by binding to the 5'-leader sequence and broadening the substrate specificity of the ribozyme. This chain is Ribonuclease P protein component, found in Clostridium botulinum (strain Alaska E43 / Type E3).